A 600-amino-acid chain; its full sequence is Proline--tRNA ligase (600 aa).

It belongs to the class-II aminoacyl-tRNA synthetase family. ProS type 1 subfamily. Homodimer.

The protein localises to the cytoplasm. It catalyses the reaction tRNA(Pro) + L-proline + ATP = L-prolyl-tRNA(Pro) + AMP + diphosphate. Its function is as follows. Catalyzes the attachment of proline to tRNA(Pro) in a two-step reaction: proline is first activated by ATP to form Pro-AMP and then transferred to the acceptor end of tRNA(Pro). As ProRS can inadvertently accommodate and process non-cognate amino acids such as alanine and cysteine, to avoid such errors it has two additional distinct editing activities against alanine. One activity is designated as 'pretransfer' editing and involves the tRNA(Pro)-independent hydrolysis of activated Ala-AMP. The other activity is designated 'posttransfer' editing and involves deacylation of mischarged Ala-tRNA(Pro). The misacylated Cys-tRNA(Pro) is not edited by ProRS. This is Proline--tRNA ligase from Prochlorococcus marinus (strain AS9601).